The chain runs to 350 residues: Induced myeloid leukemia cell differentiation protein Mcl-1 (350 aa).

Residues Lys-5 and Lys-40 each participate in a glycyl lysine isopeptide (Lys-Gly) (interchain with G-Cter in ubiquitin) cross-link. The segment at 47–87 is disordered; sequence EIGGGEAGAVIGGSAGASPPSTLTPDSRRVARPPPIGAEVP. Over residues 50 to 61 the composition is skewed to gly residues; sequence GGEAGAVIGGSA. A PEST-like region spans residues 104–175; it reads RAAPLEEMEA…PAEEEEDELY (72 aa). Phosphoserine is present on Ser-121. Residue Lys-136 forms a Glycyl lysine isopeptide (Lys-Gly) (interchain with G-Cter in ubiquitin) linkage. The segment at 148–171 is disordered; the sequence is GESGNNTSTDGSLPSTPPPAEEEE. Residues 150-161 show a composition bias toward polar residues; the sequence is SGNNTSTDGSLP. Ser-159 carries the phosphoserine; by GSK3-alpha and GSK3-beta modification. Position 162 is a phosphoserine (Ser-162). Residue Thr-163 is modified to Phosphothreonine; by MAPK. Residues Lys-194 and Lys-197 each participate in a glycyl lysine isopeptide (Lys-Gly) (interchain with G-Cter in ubiquitin) cross-link. Positions 209 to 223 match the BH3 motif; sequence ALETLRRVGDGVQRN. The short motif at 252–272 is the BH1 element; that stretch reads HVFSDGVTNWGRIVTLISFGA. Residues 304 to 319 carry the BH2 motif; it reads DWLVKQRGWDGFVEFF. Residues 328 to 348 form a helical membrane-spanning segment; sequence IRNVLLAFAGVAGVGAGLAYL.

The protein belongs to the Bcl-2 family. Interacts with HIF3A (via C-terminus domain). Interacts with BAD, BOK, BIK and BMF. Interacts with PMAIP1. Interacts with BBC3. Isoform 1 interacts with BAX, BAK1 and TPT1. Heterodimer of isoform 1 and isoform 2. Homodimers of isoform 1 or isoform 2 are not detected. Isoform 2 does not interact with pro-apoptotic BCL2-related proteins. Interacts with RTL10/BOP. Interacts with BCL2L11; may sequester BCL2L11 to prevent its pro-apoptotic activity. Interacts with GIMAP5 and HSPA8/HSC70; the interaction between HSPA8 and MCL1 is impaired in the absence of GIMAP5. Post-translationally, cleaved by CASP3 during apoptosis. In intact cells cleavage occurs preferentially after Asp-127, yielding a pro-apoptotic 28 kDa C-terminal fragment. In terms of processing, rapidly degraded in the absence of phosphorylation on Thr-163 in the PEST region. Phosphorylated on Ser-159, by GSK3, in response to IL3/interleukin-3 withdrawal. Phosphorylation at Ser-159 induces ubiquitination and proteasomal degradation, abrogating the anti-apoptotic activity. Treatment with taxol or okadaic acid induces phosphorylation on additional sites. Post-translationally, ubiquitinated. Ubiquitination is induced by phosphorylation at Ser-159. Deubiquitinated by USP20; leading to increased stability.

The protein resides in the membrane. It is found in the cytoplasm. It localises to the mitochondrion. Its subcellular location is the nucleus. The protein localises to the nucleoplasm. In terms of biological role, involved in the regulation of apoptosis versus cell survival, and in the maintenance of viability but not of proliferation. Mediates its effects by interactions with a number of other regulators of apoptosis. Isoform 1 inhibits apoptosis. Isoform 2 promotes apoptosis. This Homo sapiens (Human) protein is Induced myeloid leukemia cell differentiation protein Mcl-1 (MCL1).